The sequence spans 180 residues: Early nodulin-16 (180 aa).

Positions 1-22 are cleaved as a signal peptide; the sequence is MASSSPILLMIIFSMWLLISHS. In terms of domain architecture, Phytocyanin spans 25-129; the sequence is TDYLIGDSHN…GLKLAVVVQN (105 aa). A glycan (N-linked (GlcNAc...) asparagine) is linked at Asn-67. Cys-83 and Cys-117 form a disulfide bridge. An N-linked (GlcNAc...) asparagine glycan is attached at Asn-152. Residue Ser-154 is the site of GPI-anchor amidated serine attachment. A propeptide spans 155–180 (removed in mature form); sequence GNKGGAAGLGFIMWLGVSLVMMMFLI.

The protein belongs to the early nodulin-like (ENODL) family. In terms of tissue distribution, expressed in developing nodules upon symbiosis with Sinorhizobium meliloti.

The protein localises to the symbiosome. It localises to the cell membrane. Its function is as follows. May act as a carbohydrate transporter. The polypeptide is Early nodulin-16 (Medicago truncatula (Barrel medic)).